Here is a 152-residue protein sequence, read N- to C-terminus: MAGAYAARCTQGRAFRSGLEDKVSKQLESKGIKFDYELWRIPYVIPESDHLYTPDFLLPNGIFIETKGLWDSDDRKKHLLIREQHPELDIRLVFSSSRSKLYKGSPTSYGEWCEKHGILFADKLIPVAGVKEPKKEVPFDKFKTKKGVKKNG.

The enzyme catalyses Endonucleolytic cleavage to 5'-phosphooligonucleotide end-products.. Endodeoxyribonuclease I, which is expressed in the late stage, is necessary for T3 genetic recombination and the breakdown of host DNA. In the early stage of infection, T3 DNA replicates as a linear monomer. In the late stage, the T3 DNA replicates via linear concatemers several genomes in length. The gene 3 product has also been implicated in the maturation of these concatemers. This chain is Endodeoxyribonuclease 1 (3), found in Enterobacteria phage T3 (Bacteriophage T3).